The sequence spans 113 residues: U11-theraphotoxin-Hhn1a (113 aa).

The first 21 residues, 1-21, serve as a signal peptide directing secretion; the sequence is MNTVRVTFLLVFVLAVSLGQA. Positions 22-74 are excised as a propeptide; that stretch reads DKDENRMEMQEKTEQGNSYLDFAENLLLQKLEELEAKLLEEDSEESRNSRQKR. The segment covering 60-69 has biased composition (basic and acidic residues); it reads LEEDSEESRN. The interval 60-83 is disordered; it reads LEEDSEESRNSRQKRCIGEGVPCD. Disulfide bonds link Cys75–Cys90, Cys82–Cys95, and Cys89–Cys110.

The protein belongs to the neurotoxin 14 (magi-1) family. 01 (HNTX-16) subfamily. In terms of tissue distribution, expressed by the venom gland.

The protein resides in the secreted. Functionally, probable ion channel inhibitor. This chain is U11-theraphotoxin-Hhn1a, found in Cyriopagopus hainanus (Chinese bird spider).